Reading from the N-terminus, the 321-residue chain is Torsin-2A (321 aa).

Positions Met1–Ala27 are cleaved as a signal peptide. Residue Gly93 to Ser100 participates in ATP binding. Asn149 carries N-linked (GlcNAc...) asparagine glycosylation.

It belongs to the ClpA/ClpB family. Torsin subfamily. As to quaternary structure, homohexamer. Interacts with TOR1AIP1.

It localises to the endoplasmic reticulum lumen. The chain is Torsin-2A (Tor2a) from Rattus norvegicus (Rat).